A 115-amino-acid chain; its full sequence is Ig heavy chain V region PJ14 (115 aa).

Positions 1 to 19 (MAVLALLFCLVTFPSCILS) are cleaved as a signal peptide. The region spanning 20–115 (QVQLKESGPG…TDDTARYYCA (96 aa)) is the Ig-like domain.

This Mus musculus (Mouse) protein is Ig heavy chain V region PJ14.